The primary structure comprises 168 residues: Disulfide bond formation protein B 2 (168 aa).

At 1–9 (MLPARLRTF) the chain is on the cytoplasmic side. A helical membrane pass occupies residues 10–26 (FLPACLVALAVLVASFR). Residues 27 to 44 (LENTVGLMPCPLCLSQRL) lie on the Periplasmic side of the membrane. An intrachain disulfide couples Cys-36 to Cys-39. The chain crosses the membrane as a helical span at residues 45-61 (LLGGYALLCFAAVLQAP). Topologically, residues 62–67 (GTRGIL) are cytoplasmic. Residues 68–85 (RYARLALGCSLAGALLAA) traverse the membrane as a helical segment. Over 86–140 (RHVWLQGAEGVNEVCPVPIGRVFEQSWSEAARQLLLGGPDCRSLAWSFLDLTLPE) the chain is Periplasmic. Cys-100 and Cys-126 are oxidised to a cystine. The helical transmembrane segment at 141-159 (WSLLAFLLLAVLPLSCLLA) threads the bilayer. At 160–168 (YRFRTLART) the chain is on the cytoplasmic side.

The protein belongs to the DsbB family.

The protein resides in the cell inner membrane. In terms of biological role, required for disulfide bond formation in some periplasmic proteins. Acts by oxidizing the DsbA protein. The chain is Disulfide bond formation protein B 2 (dsbB2) from Pseudomonas putida (strain ATCC 47054 / DSM 6125 / CFBP 8728 / NCIMB 11950 / KT2440).